The primary structure comprises 327 residues: N-acetyl-gamma-glutamyl-phosphate reductase (327 aa).

Residue cysteine 136 is part of the active site.

The protein belongs to the NAGSA dehydrogenase family. Type 1 subfamily.

Its subcellular location is the cytoplasm. The catalysed reaction is N-acetyl-L-glutamate 5-semialdehyde + phosphate + NADP(+) = N-acetyl-L-glutamyl 5-phosphate + NADPH + H(+). The protein operates within amino-acid biosynthesis; L-arginine biosynthesis; N(2)-acetyl-L-ornithine from L-glutamate: step 3/4. Catalyzes the NADPH-dependent reduction of N-acetyl-5-glutamyl phosphate to yield N-acetyl-L-glutamate 5-semialdehyde. The sequence is that of N-acetyl-gamma-glutamyl-phosphate reductase from Xylella fastidiosa (strain M23).